The primary structure comprises 548 residues: Cleavage and polyadenylation specificity factor subunit 6 (548 aa).

Residues 81–161 enclose the RRM domain; it reads IALYIGNLTW…QKPIVTPCNK (81 aa). Residues 169–180 are compositionally biased toward polar residues; sequence MQSRKTATQAGQ. 2 disordered regions span residues 169–401 and 473–548; these read MQSR…MDVV and LHGI…YRHR. 3 stretches are compositionally biased toward pro residues: residues 221–279, 294–362, and 373–384; these read PAGP…PPVM, PPGP…PPPG, and GPPPSDPYGRPP. Basic and acidic residues-rich tracts occupy residues 385-400 and 490-500; these read PYER…DMDV and RSRERDHSRSR. Positions 501–511 are enriched in basic residues; the sequence is EKSRRHKSRSR. Over residues 512-548 the composition is skewed to basic and acidic residues; that stretch reads DRHDDYYRERSRERERHRDRERDRDRERDREREYRHR.

This sequence belongs to the RRM CPSF6/7 family. Component of the cleavage factor Im (CFIm) complex.

The protein localises to the nucleus. The protein resides in the nucleoplasm. Its subcellular location is the nucleus speckle. It is found in the cytoplasm. Component of the cleavage factor Im (CFIm) complex that functions as an activator of the pre-mRNA 3'-end cleavage and polyadenylation processing required for the maturation of pre-mRNA into functional mRNAs. CFIm contributes to the recruitment of multiprotein complexes on specific sequences on the pre-mRNA 3'-end, so called cleavage and polyadenylation signals (pA signals). Most pre-mRNAs contain multiple pA signals, resulting in alternative cleavage and polyadenylation (APA) producing mRNAs with variable 3'-end formation. The CFIm complex acts as a key regulator of cleavage and polyadenylation site choice during APA through its binding to 5'-UGUA-3' elements localized in the 3'-untranslated region (UTR) for a huge number of pre-mRNAs. Plays a role in mRNA export. This is Cleavage and polyadenylation specificity factor subunit 6 from Xenopus laevis (African clawed frog).